Consider the following 541-residue polypeptide: MHTLIKGVLEEILEEEVIIEYPKDREHGHYATPIAFNLAKVFKKSPLVIAEELALKISTHEKTQGLFDSVVACKGYINFTLSLDFLERFTQKALELKEKFGSQPKSERSQKIFLEFVSANPTGPLHIGHARGAVFGDSLAKIARFLGHEVLCEYYVNDMGSQIRLLGLSVWLAYREHVLKESVTYPEVFYKGEYIIEIAKKANNDLEPSLFKENEETIIEVLSGYAKDLMLLEIKDNLDALGIHFDSYASEREVFKHKDAVFERLEKANALYEKDSKIWLKSSLYQDESDRVLIKEDKSYTYLAGDIVYHDEKFKQNYTKYINIWGADHHGYIARVKASLEFLGYDSNKLEVLLAQMVRLLKDNEPYKMSKRAGNFILIKDVIDDVGKDALRFIFLSKRLDTHLEFDVNTLKKQDSSNPIYYIHYANSRIHTMLEKSPFSKEEVLQTPLTDLNAEEKYLLFSALSLPKIIESSFEEYGLQKMCEYAKTLASEFHRFYNAGKILDTPKAKELLKICLMVSLSLSNAFKLLGIEIKTKISAKD.

A 'HIGH' region motif is present at residues 119-129 (ANPTGPLHIGH).

Belongs to the class-I aminoacyl-tRNA synthetase family. Monomer.

It localises to the cytoplasm. It carries out the reaction tRNA(Arg) + L-arginine + ATP = L-arginyl-tRNA(Arg) + AMP + diphosphate. This Helicobacter pylori (strain Shi470) protein is Arginine--tRNA ligase.